The following is a 95-amino-acid chain: Aspartyl/glutamyl-tRNA(Asn/Gln) amidotransferase subunit C (95 aa).

Belongs to the GatC family. In terms of assembly, heterotrimer of A, B and C subunits.

The catalysed reaction is L-glutamyl-tRNA(Gln) + L-glutamine + ATP + H2O = L-glutaminyl-tRNA(Gln) + L-glutamate + ADP + phosphate + H(+). It catalyses the reaction L-aspartyl-tRNA(Asn) + L-glutamine + ATP + H2O = L-asparaginyl-tRNA(Asn) + L-glutamate + ADP + phosphate + 2 H(+). Allows the formation of correctly charged Asn-tRNA(Asn) or Gln-tRNA(Gln) through the transamidation of misacylated Asp-tRNA(Asn) or Glu-tRNA(Gln) in organisms which lack either or both of asparaginyl-tRNA or glutaminyl-tRNA synthetases. The reaction takes place in the presence of glutamine and ATP through an activated phospho-Asp-tRNA(Asn) or phospho-Glu-tRNA(Gln). This chain is Aspartyl/glutamyl-tRNA(Asn/Gln) amidotransferase subunit C, found in Gluconacetobacter diazotrophicus (strain ATCC 49037 / DSM 5601 / CCUG 37298 / CIP 103539 / LMG 7603 / PAl5).